Reading from the N-terminus, the 296-residue chain is Putative S-adenosyl-L-methionine-dependent methyltransferase MAV_4764 (296 aa).

S-adenosyl-L-methionine contacts are provided by residues aspartate 121 and 150–151; that span reads DL.

The protein belongs to the UPF0677 family.

In terms of biological role, exhibits S-adenosyl-L-methionine-dependent methyltransferase activity. In Mycobacterium avium (strain 104), this protein is Putative S-adenosyl-L-methionine-dependent methyltransferase MAV_4764.